A 461-amino-acid chain; its full sequence is Photosystem II CP43 reaction center protein (461 aa).

Residues 1-2 constitute a propeptide that is removed on maturation; it reads ME. Thr3 is modified (N-acetylthreonine). At Thr3 the chain carries Phosphothreonine. A run of 5 helical transmembrane segments spans residues 57-81, 122-143, 166-188, 243-263, and 279-300; these read LFEV…PHLA, LIGP…KDKN, KAMY…RVIT, KPFA…LSYS, and WFNN…ASQA. Glu355 is a [CaMn4O5] cluster binding site. The helical transmembrane segment at 435–459 threads the bilayer; the sequence is RARAAAAGFEKGIERETEPALSMKP.

The protein belongs to the PsbB/PsbC family. PsbC subfamily. As to quaternary structure, PSII is composed of 1 copy each of membrane proteins PsbA, PsbB, PsbC, PsbD, PsbE, PsbF, PsbH, PsbI, PsbJ, PsbK, PsbL, PsbM, PsbT, PsbX, PsbY, PsbZ, Psb30/Ycf12, at least 3 peripheral proteins of the oxygen-evolving complex and a large number of cofactors. It forms dimeric complexes. Binds multiple chlorophylls and provides some of the ligands for the Ca-4Mn-5O cluster of the oxygen-evolving complex. It may also provide a ligand for a Cl- that is required for oxygen evolution. PSII binds additional chlorophylls, carotenoids and specific lipids. is required as a cofactor.

It is found in the plastid. Its subcellular location is the chloroplast thylakoid membrane. Functionally, one of the components of the core complex of photosystem II (PSII). It binds chlorophyll and helps catalyze the primary light-induced photochemical processes of PSII. PSII is a light-driven water:plastoquinone oxidoreductase, using light energy to abstract electrons from H(2)O, generating O(2) and a proton gradient subsequently used for ATP formation. The polypeptide is Photosystem II CP43 reaction center protein (Chlorokybus atmophyticus (Soil alga)).